The chain runs to 439 residues: Ribosomal protein uS12 methylthiotransferase RimO (439 aa).

An MTTase N-terminal domain is found at 5-115; the sequence is PKIGFVSLGC…LIEAVHTHAP (111 aa). Cys14, Cys50, Cys79, Cys146, Cys150, and Cys153 together coordinate [4Fe-4S] cluster. Residues 132-369 enclose the Radical SAM core domain; that stretch reads LTPRHYSYLK…MGLQAQISAD (238 aa). One can recognise a TRAM domain in the interval 372–439; the sequence is QRFVGTEQQV…ESTEYDLIAD (68 aa).

It belongs to the methylthiotransferase family. RimO subfamily. [4Fe-4S] cluster is required as a cofactor.

It localises to the cytoplasm. The enzyme catalyses L-aspartate(89)-[ribosomal protein uS12]-hydrogen + (sulfur carrier)-SH + AH2 + 2 S-adenosyl-L-methionine = 3-methylsulfanyl-L-aspartate(89)-[ribosomal protein uS12]-hydrogen + (sulfur carrier)-H + 5'-deoxyadenosine + L-methionine + A + S-adenosyl-L-homocysteine + 2 H(+). Catalyzes the methylthiolation of an aspartic acid residue of ribosomal protein uS12. The sequence is that of Ribosomal protein uS12 methylthiotransferase RimO from Francisella philomiragia subsp. philomiragia (strain ATCC 25017 / CCUG 19701 / FSC 153 / O#319-036).